We begin with the raw amino-acid sequence, 378 residues long: Lipid-A-disaccharide synthase (378 aa).

The protein belongs to the LpxB family.

It carries out the reaction a lipid X + a UDP-2-N,3-O-bis[(3R)-3-hydroxyacyl]-alpha-D-glucosamine = a lipid A disaccharide + UDP + H(+). It participates in bacterial outer membrane biogenesis; LPS lipid A biosynthesis. Its function is as follows. Condensation of UDP-2,3-diacylglucosamine and 2,3-diacylglucosamine-1-phosphate to form lipid A disaccharide, a precursor of lipid A, a phosphorylated glycolipid that anchors the lipopolysaccharide to the outer membrane of the cell. The polypeptide is Lipid-A-disaccharide synthase (Pseudomonas aeruginosa (strain UCBPP-PA14)).